A 167-amino-acid chain; its full sequence is Small ribosomal subunit protein uS5 (167 aa).

Positions 12–75 constitute an S5 DRBM domain; the sequence is LQEKLITVNR…EKARRNMVTI (64 aa).

This sequence belongs to the universal ribosomal protein uS5 family. As to quaternary structure, part of the 30S ribosomal subunit. Contacts proteins S4 and S8.

Its function is as follows. With S4 and S12 plays an important role in translational accuracy. In terms of biological role, located at the back of the 30S subunit body where it stabilizes the conformation of the head with respect to the body. This is Small ribosomal subunit protein uS5 from Buchnera aphidicola subsp. Schizaphis graminum (strain Sg).